The chain runs to 450 residues: 5-amino-6-(D-ribitylamino)uracil--L-tyrosine 4-hydroxyphenyl transferase (450 aa).

The segment at 1–24 (MPDVPETVGTPDGSTEFEHRPTTD) is disordered. The region spanning 82–350 (VTFVANLNNN…MIAVSRLFLD (269 aa)) is the Radical SAM core domain. Cysteine 96, cysteine 100, and cysteine 103 together coordinate [4Fe-4S] cluster. Residues 430–450 (PDADVLGPQLGPRADGTPLLD) form a disordered region.

Belongs to the radical SAM superfamily. CofH family. As to quaternary structure, consists of two subunits, CofG and CofH. The cofactor is [4Fe-4S] cluster.

It carries out the reaction 5-amino-6-(D-ribitylamino)uracil + L-tyrosine + S-adenosyl-L-methionine = 5-amino-5-(4-hydroxybenzyl)-6-(D-ribitylimino)-5,6-dihydrouracil + 2-iminoacetate + 5'-deoxyadenosine + L-methionine + H(+). Its pathway is cofactor biosynthesis; coenzyme F0 biosynthesis. Functionally, catalyzes the radical-mediated synthesis of 5-amino-5-(4-hydroxybenzyl)-6-(D-ribitylimino)-5,6-dihydrouracil from 5-amino-6-(D-ribitylamino)uracil and L-tyrosine. In Haloarcula marismortui (strain ATCC 43049 / DSM 3752 / JCM 8966 / VKM B-1809) (Halobacterium marismortui), this protein is 5-amino-6-(D-ribitylamino)uracil--L-tyrosine 4-hydroxyphenyl transferase.